We begin with the raw amino-acid sequence, 71 residues long: uncharacterized protein (71 aa).

Positions 23–71 are disordered; it reads ENEKAGQSEEYDDDDKEENKKRRRNNGRRGPPEKKKSRRGGEEQTQRII. Residues 52 to 71 show a composition bias toward basic and acidic residues; sequence GPPEKKKSRRGGEEQTQRII.

This is an uncharacterized protein from Caenorhabditis elegans.